The following is a 340-amino-acid chain: N-acetyl-gamma-glutamyl-phosphate reductase (340 aa).

The active site involves cysteine 147.

The protein belongs to the NAGSA dehydrogenase family. Type 1 subfamily.

Its subcellular location is the cytoplasm. The catalysed reaction is N-acetyl-L-glutamate 5-semialdehyde + phosphate + NADP(+) = N-acetyl-L-glutamyl 5-phosphate + NADPH + H(+). Its pathway is amino-acid biosynthesis; L-arginine biosynthesis; N(2)-acetyl-L-ornithine from L-glutamate: step 3/4. Catalyzes the NADPH-dependent reduction of N-acetyl-5-glutamyl phosphate to yield N-acetyl-L-glutamate 5-semialdehyde. The sequence is that of N-acetyl-gamma-glutamyl-phosphate reductase from Lactococcus lactis subsp. lactis (strain IL1403) (Streptococcus lactis).